The following is a 418-amino-acid chain: Serpin A3-8 (418 aa).

The signal sequence occupies residues 1–25 (MRAERMSPLLALGLLVSGLCSRVHC). Asparagine 103, asparagine 183, asparagine 233, and asparagine 268 each carry an N-linked (GlcNAc...) asparagine glycan.

It belongs to the serpin family. Homodimer.

It is found in the cytoplasmic vesicle. The protein localises to the secretory vesicle. Its subcellular location is the chromaffin granule. It localises to the secreted. Its function is as follows. Serine protease inhibitor. In Bos taurus (Bovine), this protein is Serpin A3-8.